The following is a 208-amino-acid chain: FMN-dependent NADH:quinone oxidoreductase 1 (208 aa).

This sequence belongs to the azoreductase type 1 family. In terms of assembly, homodimer. It depends on FMN as a cofactor.

It carries out the reaction 2 a quinone + NADH + H(+) = 2 a 1,4-benzosemiquinone + NAD(+). The catalysed reaction is N,N-dimethyl-1,4-phenylenediamine + anthranilate + 2 NAD(+) = 2-(4-dimethylaminophenyl)diazenylbenzoate + 2 NADH + 2 H(+). Quinone reductase that provides resistance to thiol-specific stress caused by electrophilic quinones. Functionally, also exhibits azoreductase activity. Catalyzes the reductive cleavage of the azo bond in aromatic azo compounds to the corresponding amines. The sequence is that of FMN-dependent NADH:quinone oxidoreductase 1 from Bacillus thuringiensis subsp. konkukian (strain 97-27).